Reading from the N-terminus, the 355-residue chain is Protein RecA (355 aa).

ATP is bound at residue 72 to 79 (GPESSGKT).

This sequence belongs to the RecA family.

The protein resides in the cytoplasm. In terms of biological role, can catalyze the hydrolysis of ATP in the presence of single-stranded DNA, the ATP-dependent uptake of single-stranded DNA by duplex DNA, and the ATP-dependent hybridization of homologous single-stranded DNAs. It interacts with LexA causing its activation and leading to its autocatalytic cleavage. In Wolbachia sp. subsp. Drosophila simulans (strain wRi), this protein is Protein RecA.